Reading from the N-terminus, the 2158-residue chain is Non-reducing polyketide synthase Preu8 (2158 aa).

The N-terminal acylcarrier protein transacylase domain (SAT) stretch occupies residues 4 to 241 (LVLGDQVADH…TPIPVFAPYH (238 aa)). The region spanning 369–801 (NDKIAIVGMS…GGNTAIILED (433 aa)) is the Ketosynthase family 3 (KS3) domain. Catalysis depends on for beta-ketoacyl synthase activity residues cysteine 541, histidine 676, and histidine 719. Positions 900-1215 (FTFTGQGSQY…ANSVSTLFLA (316 aa)) are malonyl-CoA:ACP transacylase (MAT) domain. Serine 989 serves as the catalytic For acyl/malonyl transferase activity. The segment at 1285 to 1603 (SCQRIVREEL…RRVLNIMMPP (319 aa)) is product template (PT) domain. An N-terminal hotdog fold region spans residues 1287–1423 (QRIVREELHA…GTVKYEDVSQ (137 aa)). Residues 1287-1598 (QRIVREELHA…FQNIARRVLN (312 aa)) form the PKS/mFAS DH domain. Histidine 1319 (proton acceptor; for dehydratase activity) is an active-site residue. Positions 1451–1598 (AHKVLRGMAY…FQNIARRVLN (148 aa)) are C-terminal hotdog fold. The active-site Proton donor; for dehydratase activity is aspartate 1511. Residues 1619–1639 (KKAASPTLAPAKAAKPAAKTS) are compositionally biased toward low complexity. The interval 1619–1654 (KKAASPTLAPAKAAKPAAKTSKPSKARAKPAADSTT) is disordered. One can recognise a Carrier 1 domain in the interval 1651-1725 (DSTTSRVMKI…QMKKFFSQYD (75 aa)). At serine 1685 the chain carries O-(pantetheine 4'-phosphoryl)serine. Residues 1723–1779 (QYDGAPIPDDGDDSDGTDEPSNFSTPSYGADNASTPPSSAPSVNGKSSPENHEVLES) are disordered. Positions 1731–1740 (DDGDDSDGTD) are enriched in acidic residues. Positions 1743–1770 (SNFSTPSYGADNASTPPSSAPSVNGKSS) are enriched in polar residues. One can recognise a Carrier 2 domain in the interval 1779–1853 (STEVSLARKI…DIENELGMRP (75 aa)). Residue serine 1813 is modified to O-(pantetheine 4'-phosphoryl)serine. Residues 1847 to 1879 (NELGMRPKPKPKAEAAPPKSSAKASPSANKQPQ) form a disordered region. Residues 1860–1876 (EAAPPKSSAKASPSANK) show a composition bias toward low complexity. The thioesterase (TE) domain stretch occupies residues 1894–2144 (SQYPPANSVL…NHFTMMKGDH (251 aa)).

It depends on pantetheine 4'-phosphate as a cofactor.

Its function is as follows. Non-reducing polyketide synthase; part of a gene cluster that mediates the biosynthesis of a yet unidentified natural product. The polypeptide is Non-reducing polyketide synthase Preu8 (Preussia isomera (Coprophilous fungus)).